A 284-amino-acid chain; its full sequence is Bifunctional protein FolD (284 aa).

NADP(+) is bound by residues 164 to 166 and serine 189; that span reads GRS.

Belongs to the tetrahydrofolate dehydrogenase/cyclohydrolase family. Homodimer.

The catalysed reaction is (6R)-5,10-methylene-5,6,7,8-tetrahydrofolate + NADP(+) = (6R)-5,10-methenyltetrahydrofolate + NADPH. The enzyme catalyses (6R)-5,10-methenyltetrahydrofolate + H2O = (6R)-10-formyltetrahydrofolate + H(+). The protein operates within one-carbon metabolism; tetrahydrofolate interconversion. In terms of biological role, catalyzes the oxidation of 5,10-methylenetetrahydrofolate to 5,10-methenyltetrahydrofolate and then the hydrolysis of 5,10-methenyltetrahydrofolate to 10-formyltetrahydrofolate. This chain is Bifunctional protein FolD, found in Listeria innocua serovar 6a (strain ATCC BAA-680 / CLIP 11262).